A 190-amino-acid chain; its full sequence is Hypoxanthine/guanine phosphoribosyltransferase (190 aa).

It belongs to the purine/pyrimidine phosphoribosyltransferase family. Archaeal HPRT subfamily. In terms of assembly, homodimer.

It localises to the cytoplasm. The enzyme catalyses IMP + diphosphate = hypoxanthine + 5-phospho-alpha-D-ribose 1-diphosphate. The catalysed reaction is GMP + diphosphate = guanine + 5-phospho-alpha-D-ribose 1-diphosphate. It participates in purine metabolism; IMP biosynthesis via salvage pathway; IMP from hypoxanthine: step 1/1. Catalyzes a salvage reaction resulting in the formation of IMP that is energically less costly than de novo synthesis. The polypeptide is Hypoxanthine/guanine phosphoribosyltransferase (Methanobacterium paludis (strain DSM 25820 / JCM 18151 / SWAN1)).